The chain runs to 499 residues: Calcium/calmodulin-dependent protein kinase type II subunit delta (499 aa).

Ala2 is subject to N-acetylalanine. The region spanning 14–272 (YQLFEELGKG…ASEALKHPWI (259 aa)) is the Protein kinase domain. Residues 20 to 28 (LGKGAFSVV) and Lys43 each bind ATP. The active-site Proton acceptor is Asp136. Residues 283–292 (HRQETVDCLK) form an autoinhibitory domain region. Phosphothreonine; by autocatalysis is present on Thr287. The interval 291–301 (LKKFNARRKLK) is calmodulin-binding. Thr306 and Thr307 each carry phosphothreonine; by autocatalysis. Phosphoserine is present on Ser315. An N6-acetyllysine modification is found at Lys318. Phosphoserine is present on residues Ser319 and Ser330. Thr331 is modified (phosphothreonine). Phosphoserine is present on Ser333. A phosphothreonine mark is found at Thr336 and Thr337. Phosphoserine occurs at positions 404, 490, and 494.

It belongs to the protein kinase superfamily. CAMK Ser/Thr protein kinase family. CaMK subfamily. In terms of assembly, CAMK2 is composed of 4 different chains: alpha (CAMK2A), beta (CAMK2B), gamma (CAMK2G), and delta (CAMK2D). The different isoforms assemble into homo- or heteromultimeric holoenzymes composed of 12 subunits with two hexameric rings stacked one on top of the other. Interacts with RRAD and CACNB2. Autophosphorylation of Thr-287 following activation by Ca(2+)/calmodulin. Phosphorylation of Thr-287 locks the kinase into an activated state. Expressed in cardiac muscle and skeletal muscle. Isoform Delta 3, isoform Delta 2, isoform Delta 8 and isoform Delta 9 are expressed in cardiac muscle. Isoform Delta 11 is expressed in skeletal muscle.

It localises to the cell membrane. It is found in the sarcolemma. Its subcellular location is the sarcoplasmic reticulum membrane. It catalyses the reaction L-seryl-[protein] + ATP = O-phospho-L-seryl-[protein] + ADP + H(+). It carries out the reaction L-threonyl-[protein] + ATP = O-phospho-L-threonyl-[protein] + ADP + H(+). With respect to regulation, activated by Ca(2+)/calmodulin. Binding of calmodulin results in conformational change that relieves intrasteric autoinhibition and allows autophosphorylation of Thr-287 which turns the kinase in a constitutively active form and confers to the kinase a Ca(2+)-independent activity. Calcium/calmodulin-dependent protein kinase involved in the regulation of Ca(2+) homeostatis and excitation-contraction coupling (ECC) in heart by targeting ion channels, transporters and accessory proteins involved in Ca(2+) influx into the myocyte, Ca(2+) release from the sarcoplasmic reticulum (SR), SR Ca(2+) uptake and Na(+) and K(+) channel transport. Targets also transcription factors and signaling molecules to regulate heart function. In its activated form, is involved in the pathogenesis of dilated cardiomyopathy and heart failure. Contributes to cardiac decompensation and heart failure by regulating SR Ca(2+) release via direct phosphorylation of RYR2 Ca(2+) channel on 'Ser-2808'. In the nucleus, phosphorylates the MEF2 repressor HDAC4, promoting its nuclear export and binding to 14-3-3 protein, and expression of MEF2 and genes involved in the hypertrophic program. Is essential for left ventricular remodeling responses to myocardial infarction. In pathological myocardial remodeling acts downstream of the beta adrenergic receptor signaling cascade to regulate key proteins involved in ECC. Regulates Ca(2+) influx to myocytes by binding and phosphorylating the L-type Ca(2+) channel subunit beta-2 CACNB2. In addition to Ca(2+) channels, can target and regulate the cardiac sarcolemmal Na(+) channel Nav1.5/SCN5A and the K+ channel Kv4.3/KCND3, which contribute to arrhythmogenesis in heart failure. Phosphorylates phospholamban (PLN/PLB), an endogenous inhibitor of SERCA2A/ATP2A2, contributing to the enhancement of SR Ca(2+) uptake that may be important in frequency-dependent acceleration of relaxation (FDAR) and maintenance of contractile function during acidosis. May participate in the modulation of skeletal muscle function in response to exercise, by regulating SR Ca(2+) transport through phosphorylation of PLN/PLB and triadin, a ryanodine receptor-coupling factor. In response to interferon-gamma (IFN-gamma) stimulation, catalyzes phosphorylation of STAT1, stimulating the JAK-STAT signaling pathway. The sequence is that of Calcium/calmodulin-dependent protein kinase type II subunit delta (CAMK2D) from Homo sapiens (Human).